Consider the following 301-residue polypeptide: Structure-specific endonuclease subunit SLX1 (301 aa).

Residues 12–95 (AFYCCYLLRS…QHPYQTRFIK (84 aa)) form the GIY-YIG domain. The SLX1-type zinc finger occupies 216 to 283 (CAICEKIVDY…IPTSGQCPNC (68 aa)).

Belongs to the SLX1 family. In terms of assembly, forms a heterodimer with SLX4. Requires a divalent metal cation as cofactor.

It is found in the nucleus. Functionally, catalytic subunit of the SLX1-SLX4 structure-specific endonuclease that resolves DNA secondary structures generated during DNA repair and recombination. Has endonuclease activity towards branched DNA substrates, introducing single-strand cuts in duplex DNA close to junctions with ss-DNA. The protein is Structure-specific endonuclease subunit SLX1 of Eremothecium gossypii (strain ATCC 10895 / CBS 109.51 / FGSC 9923 / NRRL Y-1056) (Yeast).